Consider the following 587-residue polypeptide: V-type proton ATPase catalytic subunit A (587 aa).

Residue 243-250 (GAFGCGKT) coordinates ATP.

This sequence belongs to the ATPase alpha/beta chains family. V-ATPase is a heteromultimeric enzyme composed of a peripheral catalytic V1 complex (main components: subunits A, B, C, D, E, and F) attached to an integral membrane V0 proton pore complex (main component: the proteolipid protein).

The catalysed reaction is ATP + H2O + 4 H(+)(in) = ADP + phosphate + 5 H(+)(out). Functionally, catalytic subunit of the peripheral V1 complex of vacuolar ATPase. V-ATPase vacuolar ATPase is responsible for acidifying a variety of intracellular compartments in eukaryotic cells. The protein is V-type proton ATPase catalytic subunit A of Cyanidium caldarium (Red alga).